A 171-amino-acid polypeptide reads, in one-letter code: Peptide deformylase (171 aa).

Positions 91 and 133 each coordinate Fe cation. Glu-134 is a catalytic residue. Residue His-137 participates in Fe cation binding.

Belongs to the polypeptide deformylase family. It depends on Fe(2+) as a cofactor.

It carries out the reaction N-terminal N-formyl-L-methionyl-[peptide] + H2O = N-terminal L-methionyl-[peptide] + formate. Functionally, removes the formyl group from the N-terminal Met of newly synthesized proteins. Requires at least a dipeptide for an efficient rate of reaction. N-terminal L-methionine is a prerequisite for activity but the enzyme has broad specificity at other positions. In Cronobacter sakazakii (strain ATCC BAA-894) (Enterobacter sakazakii), this protein is Peptide deformylase.